Reading from the N-terminus, the 369-residue chain is UDP-3-O-acylglucosamine N-acyltransferase (369 aa).

H263 (proton acceptor) is an active-site residue.

The protein belongs to the transferase hexapeptide repeat family. LpxD subfamily. As to quaternary structure, homotrimer.

The catalysed reaction is a UDP-3-O-[(3R)-3-hydroxyacyl]-alpha-D-glucosamine + a (3R)-hydroxyacyl-[ACP] = a UDP-2-N,3-O-bis[(3R)-3-hydroxyacyl]-alpha-D-glucosamine + holo-[ACP] + H(+). Its pathway is bacterial outer membrane biogenesis; LPS lipid A biosynthesis. Catalyzes the N-acylation of UDP-3-O-acylglucosamine using 3-hydroxyacyl-ACP as the acyl donor. Is involved in the biosynthesis of lipid A, a phosphorylated glycolipid that anchors the lipopolysaccharide to the outer membrane of the cell. This is UDP-3-O-acylglucosamine N-acyltransferase from Burkholderia vietnamiensis (strain G4 / LMG 22486) (Burkholderia cepacia (strain R1808)).